The sequence spans 89 residues: Large ribosomal subunit protein eL34 (89 aa).

The disordered stretch occupies residues 1–22; it reads MPAPRYKSGSSKKVYRKAPGNS.

The protein belongs to the eukaryotic ribosomal protein eL34 family.

This chain is Large ribosomal subunit protein eL34, found in Methanococcus maripaludis (strain C7 / ATCC BAA-1331).